Here is a 390-residue protein sequence, read N- to C-terminus: 23S rRNA (uracil(747)-C(5))-methyltransferase RlmC (390 aa).

4 residues coordinate [4Fe-4S] cluster: Cys-12, Cys-20, Cys-23, and Cys-100. 4 residues coordinate S-adenosyl-L-methionine: Gln-225, Phe-254, Glu-275, and Asn-322. Catalysis depends on Cys-349, which acts as the Nucleophile.

The protein belongs to the class I-like SAM-binding methyltransferase superfamily. RNA M5U methyltransferase family. RlmC subfamily.

It catalyses the reaction uridine(747) in 23S rRNA + S-adenosyl-L-methionine = 5-methyluridine(747) in 23S rRNA + S-adenosyl-L-homocysteine + H(+). In terms of biological role, catalyzes the formation of 5-methyl-uridine at position 747 (m5U747) in 23S rRNA. This Shewanella baltica (strain OS223) protein is 23S rRNA (uracil(747)-C(5))-methyltransferase RlmC.